A 343-amino-acid polypeptide reads, in one-letter code: Protein RecA (343 aa).

66–73 (GPESSGKT) contributes to the ATP binding site.

It belongs to the RecA family.

The protein localises to the cytoplasm. Can catalyze the hydrolysis of ATP in the presence of single-stranded DNA, the ATP-dependent uptake of single-stranded DNA by duplex DNA, and the ATP-dependent hybridization of homologous single-stranded DNAs. It interacts with LexA causing its activation and leading to its autocatalytic cleavage. The polypeptide is Protein RecA (Rickettsia massiliae (strain Mtu5)).